A 445-amino-acid chain; its full sequence is 3-phosphoshikimate 1-carboxyvinyltransferase (445 aa).

The tract at residues 1-25 (MTDSNQPMPLQARKSGALHGTARVP) is disordered. Lysine 28, serine 29, and arginine 33 together coordinate 3-phosphoshikimate. Lysine 28 is a phosphoenolpyruvate binding site. The phosphoenolpyruvate site is built by glycine 101 and arginine 129. The 3-phosphoshikimate site is built by serine 175, glutamine 177, aspartate 328, and lysine 355. Residue glutamine 177 coordinates phosphoenolpyruvate. The active-site Proton acceptor is the aspartate 328. Arginine 359 and arginine 402 together coordinate phosphoenolpyruvate.

Belongs to the EPSP synthase family. Monomer.

The protein localises to the cytoplasm. The enzyme catalyses 3-phosphoshikimate + phosphoenolpyruvate = 5-O-(1-carboxyvinyl)-3-phosphoshikimate + phosphate. The protein operates within metabolic intermediate biosynthesis; chorismate biosynthesis; chorismate from D-erythrose 4-phosphate and phosphoenolpyruvate: step 6/7. Its function is as follows. Catalyzes the transfer of the enolpyruvyl moiety of phosphoenolpyruvate (PEP) to the 5-hydroxyl of shikimate-3-phosphate (S3P) to produce enolpyruvyl shikimate-3-phosphate and inorganic phosphate. In Rhodopseudomonas palustris (strain ATCC BAA-98 / CGA009), this protein is 3-phosphoshikimate 1-carboxyvinyltransferase.